The sequence spans 1465 residues: MSDLFAKLMDQIEMPLDMRRSSAFSSADIIEVKVHSVSRLWEFHFAFAAVLPIATYRELHDRLIRTFEAADIKVTFDIQAAQVDYSDDLLQAYYQEAFEHAPCNSASFKSSFSKLKVTYEDDKLIIAAPGFVNNDHFRNNHLPNLVKQLEAFGFGTLTIDMVSDQEMTEHLTKDFVSSRQALVKKAVQDNLEAQKSLEAMMPPVEEATPAPKFDYKERAAKRQAGFEKATITPMIEIETEENRIVFEGMVFDVERKTTRTGRHIINFKMTDYTSSFALQKWAKDDEELRKFDMIAKGAWLRVQGNIETNPFTKSLTMNVQQVKEIVHHDRKDLMPEGQKRVELHAHTNMSTMDALPTVESLIDTAAKWGHKAVAITDHANVQSFPHGYHRARKAGIKAIFGLEANIVEDKVPISYDPVDMDLHEATYVVFDVETTGLSAMNNDLIQIAASKMFKGNIVEQFDEFIDPGHPLSAFTTELTGITDKHLQGAKPLVTVLKAFQDFCKDSILVAHNASFDVGFMNANYERHDLPKITQPVIDTLEFARNLYPEYKRHGLGPLTKRFQVSLDHHHMANYDAEATGRLLFIFLRDAREKHGIKNLLQLNTDLVAEDSYKKARIKHATIYVQNQVGLKNMFKLVSLSNIKYFEGVPRIPRTVLDAHREGLLLGTACSDGEVFDAVLTKGIDAAVDLAKYYDFIEIMPPAIYQPLVVRELIKDQAGIEQVIRDLIEVGKRAKKPVLATGNVHYLEPEEEIYREIIVRSLGQGAMINRTIGRGEGAQPAPLPKAHFRTTNEMLDEFAFLGKDLAYQVVVQNTQDFADRIEEVEVVKGDLYTPYIDKAEETVAELTYQKAFEIYGNPLPDIIDLRIEKELTSILGNGFAVIYLASQMLVNRSNERGYLVGSRGSVGSSFVATMIGITEVNPMPPHYVCPSCQHSEFITDGSVGSGYDLPNKPCPKCGTPYQKDGQDIPFETFLGFDGDKVPDIDLNFSGDDQPSAHLDVRDIFGDEYAFRAGTVGTVAEKTAYGFVKGYERDYGKFYRDAEVDRLAAGAAGVKRTTGQHPGGIVVIPNYMDVYDFTPVQYPADDVTASWQTTHFNFHDIDENVLKLDILGHDDPTMIRKLQDLSGIDPITIPADDPGVMALFSGTEILGVTPEQIGTPTGMLGIPEFGTNFVRGMVNETHPTTFAELLQLSGLSHGTDVWLGNAQDLIKEGIATLKTVIGCRDDIMVYLMHAGLEPKMAFTIMERVRKGLWLKISEEERNGYIDAMRENNVPDWYIESCGKIKYMFPKAHAAAYVLMALRVAYFKVHHPIMYYCAYFSIRAKAFELKTMSGGLDAVKARMEDITIKRKNNEATNVENDLFTTLEIVNEMLERGFKFGKLDLYKSDAIEFQIKGDTLIPPFIALEGLGENVAKQIVKARQEGEFLSKMELRKRGGASSTLVEKMDEMSILGNMPEDNQLSLFDDFF.

The 157-residue stretch at 427–583 folds into the Exonuclease domain; the sequence is YVVFDVETTG…YDAEATGRLL (157 aa).

It belongs to the DNA polymerase type-C family. PolC subfamily.

It is found in the cytoplasm. The enzyme catalyses DNA(n) + a 2'-deoxyribonucleoside 5'-triphosphate = DNA(n+1) + diphosphate. Its function is as follows. Required for replicative DNA synthesis. This DNA polymerase also exhibits 3' to 5' exonuclease activity. This chain is DNA polymerase III PolC-type, found in Streptococcus pyogenes serotype M12 (strain MGAS2096).